The following is a 271-amino-acid chain: uncharacterized protein (271 aa).

The signal sequence occupies residues 1 to 22 (MARELLFLACAIVIADSWPAKA).

This is an uncharacterized protein from Sinorhizobium fredii (strain NBRC 101917 / NGR234).